A 201-amino-acid polypeptide reads, in one-letter code: Small ribosomal subunit protein uS4 (201 aa).

The 61-residue stretch at Ser91–Glu151 folds into the S4 RNA-binding domain.

The protein belongs to the universal ribosomal protein uS4 family. As to quaternary structure, part of the 30S ribosomal subunit. Contacts protein S5. The interaction surface between S4 and S5 is involved in control of translational fidelity.

Functionally, one of the primary rRNA binding proteins, it binds directly to 16S rRNA where it nucleates assembly of the body of the 30S subunit. With S5 and S12 plays an important role in translational accuracy. The sequence is that of Small ribosomal subunit protein uS4 from Mycolicibacterium gilvum (strain PYR-GCK) (Mycobacterium gilvum (strain PYR-GCK)).